The chain runs to 156 residues: Eosinophil cationic-type ribonuclease 3 (156 aa).

The signal sequence occupies residues 1-25 (MGPKLLESRLCLLLLLRLVLMLASC). Residue His38 is the Proton acceptor of the active site. An N-linked (GlcNAc...) asparagine glycan is attached at Asn41. 4 disulfides stabilise this stretch: Cys47/Cys106, Cys61/Cys119, Cys79/Cys134, and Cys86/Cys94. 62 to 66 (KGLNT) serves as a coordination point for substrate. N-linked (GlcNAc...) asparagine glycosylation is found at Asn89, Asn96, and Asn107. The Proton donor role is filled by His151.

Belongs to the pancreatic ribonuclease family.

The protein is Eosinophil cationic-type ribonuclease 3 (Ear3) of Mus musculus (Mouse).